Consider the following 121-residue polypeptide: Large ribosomal subunit protein uL22 (121 aa).

This sequence belongs to the universal ribosomal protein uL22 family. In terms of assembly, part of the 50S ribosomal subunit.

This protein binds specifically to 23S rRNA; its binding is stimulated by other ribosomal proteins, e.g. L4, L17, and L20. It is important during the early stages of 50S assembly. It makes multiple contacts with different domains of the 23S rRNA in the assembled 50S subunit and ribosome. Its function is as follows. The globular domain of the protein is located near the polypeptide exit tunnel on the outside of the subunit, while an extended beta-hairpin is found that lines the wall of the exit tunnel in the center of the 70S ribosome. The polypeptide is Large ribosomal subunit protein uL22 (Kocuria rhizophila (strain ATCC 9341 / DSM 348 / NBRC 103217 / DC2201)).